Here is a 394-residue protein sequence, read N- to C-terminus: Chorismate synthase (394 aa).

NADP(+) contacts are provided by R42 and R48. Residues 137 to 139 (RAS), 258 to 259 (QA), G302, 317 to 321 (KPIAT), and R343 each bind FMN.

This sequence belongs to the chorismate synthase family. Homotetramer. FMNH2 serves as cofactor.

It carries out the reaction 5-O-(1-carboxyvinyl)-3-phosphoshikimate = chorismate + phosphate. Its pathway is metabolic intermediate biosynthesis; chorismate biosynthesis; chorismate from D-erythrose 4-phosphate and phosphoenolpyruvate: step 7/7. Functionally, catalyzes the anti-1,4-elimination of the C-3 phosphate and the C-6 proR hydrogen from 5-enolpyruvylshikimate-3-phosphate (EPSP) to yield chorismate, which is the branch point compound that serves as the starting substrate for the three terminal pathways of aromatic amino acid biosynthesis. This reaction introduces a second double bond into the aromatic ring system. The sequence is that of Chorismate synthase from Streptomyces avermitilis (strain ATCC 31267 / DSM 46492 / JCM 5070 / NBRC 14893 / NCIMB 12804 / NRRL 8165 / MA-4680).